Here is a 101-residue protein sequence, read N- to C-terminus: Large ribosomal subunit protein uL23 (101 aa).

The protein belongs to the universal ribosomal protein uL23 family. As to quaternary structure, part of the 50S ribosomal subunit. Contacts protein L29, and trigger factor when it is bound to the ribosome.

Its function is as follows. One of the early assembly proteins it binds 23S rRNA. One of the proteins that surrounds the polypeptide exit tunnel on the outside of the ribosome. Forms the main docking site for trigger factor binding to the ribosome. The protein is Large ribosomal subunit protein uL23 of Leptospira biflexa serovar Patoc (strain Patoc 1 / Ames).